The chain runs to 121 residues: Large ribosomal subunit protein uL18 (121 aa).

It belongs to the universal ribosomal protein uL18 family. Part of the 50S ribosomal subunit; part of the 5S rRNA/L5/L18/L25 subcomplex. Contacts the 5S and 23S rRNAs.

Its function is as follows. This is one of the proteins that bind and probably mediate the attachment of the 5S RNA into the large ribosomal subunit, where it forms part of the central protuberance. The chain is Large ribosomal subunit protein uL18 from Thermoanaerobacter pseudethanolicus (strain ATCC 33223 / 39E) (Clostridium thermohydrosulfuricum).